The primary structure comprises 201 residues: ADP-ribosylation factor-related protein 1 (201 aa).

Met1 carries the N-acetylmethionine modification. GTP-binding positions include 24-31 (GLDNAGKT), 75-79 (DLGGQ), and 134-137 (NKQD).

It belongs to the small GTPase superfamily. Arf family. Interacts with SYS1.

Its subcellular location is the golgi apparatus. The protein localises to the trans-Golgi network. In terms of biological role, trans-Golgi-associated GTPase that regulates protein sorting. Controls the targeting of ARL1 and its effector to the trans-Golgi. Required for the lipidation of chylomicrons in the intestine and required for VLDL lipidation in the liver. The chain is ADP-ribosylation factor-related protein 1 (Arfrp1) from Mus musculus (Mouse).